Consider the following 618-residue polypeptide: Proline--tRNA ligase (618 aa).

This sequence belongs to the class-II aminoacyl-tRNA synthetase family. ProS type 1 subfamily. As to quaternary structure, homodimer.

Its subcellular location is the cytoplasm. The catalysed reaction is tRNA(Pro) + L-proline + ATP = L-prolyl-tRNA(Pro) + AMP + diphosphate. Functionally, catalyzes the attachment of proline to tRNA(Pro) in a two-step reaction: proline is first activated by ATP to form Pro-AMP and then transferred to the acceptor end of tRNA(Pro). As ProRS can inadvertently accommodate and process non-cognate amino acids such as alanine and cysteine, to avoid such errors it has two additional distinct editing activities against alanine. One activity is designated as 'pretransfer' editing and involves the tRNA(Pro)-independent hydrolysis of activated Ala-AMP. The other activity is designated 'posttransfer' editing and involves deacylation of mischarged Ala-tRNA(Pro). The misacylated Cys-tRNA(Pro) is not edited by ProRS. This is Proline--tRNA ligase from Streptococcus pyogenes serotype M28 (strain MGAS6180).